Here is a 473-residue protein sequence, read N- to C-terminus: tRNA modification GTPase MnmE (473 aa).

3 residues coordinate (6S)-5-formyl-5,6,7,8-tetrahydrofolate: Arg30, Glu95, and Arg134. The TrmE-type G domain occupies 230-394; the sequence is GVAAVIAGRP…LKSTMAGMVE (165 aa). Residues 240–245, 259–265, and 284–287 contribute to the GTP site; these read NAGKST, SHMPGTT, and DTAG. Mg(2+) is bound by residues Ser244 and Thr265. Lys473 contributes to the (6S)-5-formyl-5,6,7,8-tetrahydrofolate binding site.

The protein belongs to the TRAFAC class TrmE-Era-EngA-EngB-Septin-like GTPase superfamily. TrmE GTPase family. In terms of assembly, homodimer. Heterotetramer of two MnmE and two MnmG subunits. It depends on K(+) as a cofactor.

It is found in the cytoplasm. Exhibits a very high intrinsic GTPase hydrolysis rate. Involved in the addition of a carboxymethylaminomethyl (cmnm) group at the wobble position (U34) of certain tRNAs, forming tRNA-cmnm(5)s(2)U34. The polypeptide is tRNA modification GTPase MnmE (Chlorobium phaeovibrioides (strain DSM 265 / 1930) (Prosthecochloris vibrioformis (strain DSM 265))).